The sequence spans 148 residues: Single-stranded DNA-binding protein 1-B, mitochondrial (148 aa).

The N-terminal 17 residues, 1-17, are a transit peptide targeting the mitochondrion; sequence MFHRPVLQVFRQFARCQ. The 113-residue stretch at 30–142 folds into the SSB domain; that stretch reads MNKVQLLGRV…IIADNIIFLT (113 aa).

Homotetramer.

Its subcellular location is the mitochondrion. It localises to the mitochondrion matrix. The protein localises to the mitochondrion nucleoid. Its function is as follows. Binds preferentially and cooperatively to pyrimidine rich single-stranded DNA (ss-DNA). Required to maintain the copy number of mitochondrial DNA (mtDNA) and plays crucial roles during mtDNA replication that stimulate activity of the DNA polymerase at the replication fork. May also function in mtDNA repair. The chain is Single-stranded DNA-binding protein 1-B, mitochondrial (ssbp1-b) from Xenopus laevis (African clawed frog).